The primary structure comprises 106 residues: Protamine (106 aa).

Positions alanine 1–arginine 106 are disordered.

In terms of tissue distribution, sperm.

The protein localises to the nucleus. The protein resides in the chromosome. This is Protamine from Phorcus turbinatus (Sea snail).